Reading from the N-terminus, the 404-residue chain is Ribosomal RNA large subunit methyltransferase F (404 aa).

Basic residues-rich tracts occupy residues 1 to 10 (MTKHSQKQNR) and 18 to 29 (QTRRKKPAGKLK). Disordered regions lie at residues 1–54 (MTKH…HERN), 156–177 (GTRQNVPYASKPESSAPKQRYK), and 289–308 (RAAKGHKPEPAASKAKPDAN). Over residues 30-54 (AKSEAKLDTRGKPETTEKKGLHERN) the composition is skewed to basic and acidic residues. A compositionally biased stretch (polar residues) spans 157 to 172 (TRQNVPYASKPESSAP).

Belongs to the methyltransferase superfamily. METTL16/RlmF family.

The protein localises to the cytoplasm. It catalyses the reaction adenosine(1618) in 23S rRNA + S-adenosyl-L-methionine = N(6)-methyladenosine(1618) in 23S rRNA + S-adenosyl-L-homocysteine + H(+). Its function is as follows. Specifically methylates the adenine in position 1618 of 23S rRNA. The sequence is that of Ribosomal RNA large subunit methyltransferase F from Shewanella sediminis (strain HAW-EB3).